The following is a 244-amino-acid chain: 1-(5-phosphoribosyl)-5-[(5-phosphoribosylamino)methylideneamino] imidazole-4-carboxamide isomerase (244 aa).

The Proton acceptor role is filled by D10. D132 (proton donor) is an active-site residue.

This sequence belongs to the HisA/HisF family.

It is found in the cytoplasm. The catalysed reaction is 1-(5-phospho-beta-D-ribosyl)-5-[(5-phospho-beta-D-ribosylamino)methylideneamino]imidazole-4-carboxamide = 5-[(5-phospho-1-deoxy-D-ribulos-1-ylimino)methylamino]-1-(5-phospho-beta-D-ribosyl)imidazole-4-carboxamide. It functions in the pathway amino-acid biosynthesis; L-histidine biosynthesis; L-histidine from 5-phospho-alpha-D-ribose 1-diphosphate: step 4/9. The protein is 1-(5-phosphoribosyl)-5-[(5-phosphoribosylamino)methylideneamino] imidazole-4-carboxamide isomerase of Xanthomonas campestris pv. campestris (strain 8004).